The following is a 678-amino-acid chain: DNA ligase (678 aa).

NAD(+)-binding positions include 36-40 (DAEYD), 85-86 (SL), and Glu-117. Lys-119 functions as the N6-AMP-lysine intermediate in the catalytic mechanism. Positions 140, 177, 294, and 318 each coordinate NAD(+). Residues Cys-412, Cys-415, Cys-430, and Cys-436 each coordinate Zn(2+). The 84-residue stretch at 595-678 (ADEQPLNGQT…NLLREHGIEV (84 aa)) folds into the BRCT domain.

This sequence belongs to the NAD-dependent DNA ligase family. LigA subfamily. Mg(2+) is required as a cofactor. It depends on Mn(2+) as a cofactor.

It catalyses the reaction NAD(+) + (deoxyribonucleotide)n-3'-hydroxyl + 5'-phospho-(deoxyribonucleotide)m = (deoxyribonucleotide)n+m + AMP + beta-nicotinamide D-nucleotide.. In terms of biological role, DNA ligase that catalyzes the formation of phosphodiester linkages between 5'-phosphoryl and 3'-hydroxyl groups in double-stranded DNA using NAD as a coenzyme and as the energy source for the reaction. It is essential for DNA replication and repair of damaged DNA. The chain is DNA ligase from Marinobacter nauticus (strain ATCC 700491 / DSM 11845 / VT8) (Marinobacter aquaeolei).